A 129-amino-acid chain; its full sequence is Small ribosomal subunit protein uS11 (129 aa).

The protein belongs to the universal ribosomal protein uS11 family. As to quaternary structure, part of the 30S ribosomal subunit. Interacts with proteins S7 and S18. Binds to IF-3.

Functionally, located on the platform of the 30S subunit, it bridges several disparate RNA helices of the 16S rRNA. Forms part of the Shine-Dalgarno cleft in the 70S ribosome. The protein is Small ribosomal subunit protein uS11 of Nitrosomonas eutropha (strain DSM 101675 / C91 / Nm57).